Here is a 106-residue protein sequence, read N- to C-terminus: Large ribosomal subunit protein bL21 (106 aa).

Belongs to the bacterial ribosomal protein bL21 family. As to quaternary structure, part of the 50S ribosomal subunit. Contacts protein L20.

This protein binds to 23S rRNA in the presence of protein L20. In Coprothermobacter proteolyticus (strain ATCC 35245 / DSM 5265 / OCM 4 / BT), this protein is Large ribosomal subunit protein bL21.